Here is a 399-residue protein sequence, read N- to C-terminus: Elongation factor Tu (399 aa).

In terms of domain architecture, tr-type G spans 10–204 (KPHVNIGTIG…AVDEAIPEPE (195 aa)). The interval 19-26 (GHVDHGKT) is G1. Residue 19-26 (GHVDHGKT) participates in GTP binding. Mg(2+) is bound at residue Thr26. The interval 60–64 (GITIN) is G2. The segment at 81–84 (DCPG) is G3. Residues 81 to 85 (DCPGH) and 136 to 139 (NKCD) contribute to the GTP site. Residues 136-139 (NKCD) are G4. Residues 174 to 176 (SGL) are G5.

The protein belongs to the TRAFAC class translation factor GTPase superfamily. Classic translation factor GTPase family. EF-Tu/EF-1A subfamily. As to quaternary structure, monomer.

Its subcellular location is the cytoplasm. It catalyses the reaction GTP + H2O = GDP + phosphate + H(+). Its function is as follows. GTP hydrolase that promotes the GTP-dependent binding of aminoacyl-tRNA to the A-site of ribosomes during protein biosynthesis. The polypeptide is Elongation factor Tu (Parasynechococcus marenigrum (strain WH8102)).